Consider the following 386-residue polypeptide: Probable magnesium transporter NIPA5 (386 aa).

Topologically, residues 1-18 are extracellular; it reads MVYSSGSWRDAYKGMSSD. Residues 19-39 traverse the membrane as a helical segment; that stretch reads NVKGLVLALSSSIFIGASFIV. Over 40–61 the chain is Cytoplasmic; sequence KKKGLKKAGASGLRAGSGGYSY. The next 2 membrane-spanning stretches (helical) occupy residues 62–82 and 83–103; these read LLEPLWWIGMITMIVGEIANF and AAYAFAPAILVTPLGALSIII. The Cytoplasmic segment spans residues 104-115; the sequence is SASLAHIILQEK. A helical transmembrane segment spans residues 116–136; the sequence is LHTFGILGCALCIVGSVTIVL. Over 137–157 the chain is Extracellular; that stretch reads HAPQEQDIVSVLEVWNLATEP. A helical transmembrane segment spans residues 158–178; it reads AFLFYAAAVVGAAIVLIVQFI. Residues 179-189 lie on the Cytoplasmic side of the membrane; that stretch reads PLYGQSHVMVY. The chain crosses the membrane as a helical span at residues 190–210; it reads IGVCSLIGSLSVMSVKALGIA. Topologically, residues 211-220 are extracellular; it reads LKLTFSGTNQ. The helical transmembrane segment at 221-241 threads the bilayer; the sequence is LGYPQTWVFTVIVLFCVITQM. Topologically, residues 242–255 are cytoplasmic; it reads NYLNKALDTFNTAV. A helical transmembrane segment spans residues 256–276; sequence VSPIYYVMFTSLTILASVIMF. The Extracellular segment spans residues 277–283; that stretch reads KDWDRQS. Residues 284-304 form a helical membrane-spanning segment; the sequence is GTQIMTELCGFVTILSGTFLL. The Cytoplasmic segment spans residues 305–386; sequence HTTTDMVDGE…LRRQESSLRS (82 aa). Residues 352–386 are disordered; that stretch reads RQESAKSPRPARQNKQLEDDLEAVPLRRQESSLRS. Basic and acidic residues predominate over residues 376–386; the sequence is PLRRQESSLRS.

Belongs to the NIPA (TC 2.A.7) family. In terms of assembly, homodimer.

Its subcellular location is the cell membrane. It is found in the early endosome. Acts as a Mg(2+) transporter. Can also transport other divalent cations such as Fe(2+), Sr(2+), Ba(2+), Mn(2+) and Co(2+) but to a much less extent than Mg(2+). In Arabidopsis thaliana (Mouse-ear cress), this protein is Probable magnesium transporter NIPA5.